The following is a 282-amino-acid chain: Undecaprenyl-diphosphatase (282 aa).

Transmembrane regions (helical) follow at residues 40-60 (GAAFTAIIQIGTLAAVLMYFW), 85-105 (ARMGWMIAAGTIPIVVFGLLF), 115-135 (SLYWISGALIGLALLLSLAEW), 153-173 (IGWKEALLIGLAQSIALIPGS), 193-213 (AARFSFLLSLPAVFAAGIFQL), 230-250 (LAAATFTSAVVGYLSIAFLLS), and 258-278 (TIFIIYRLLAGILLLLLLSTG).

This sequence belongs to the UppP family.

Its subcellular location is the cell inner membrane. The catalysed reaction is di-trans,octa-cis-undecaprenyl diphosphate + H2O = di-trans,octa-cis-undecaprenyl phosphate + phosphate + H(+). Its function is as follows. Catalyzes the dephosphorylation of undecaprenyl diphosphate (UPP). Confers resistance to bacitracin. This Chlorobium phaeovibrioides (strain DSM 265 / 1930) (Prosthecochloris vibrioformis (strain DSM 265)) protein is Undecaprenyl-diphosphatase.